The chain runs to 177 residues: Thymidine kinase (177 aa).

11 to 18 serves as a coordination point for ATP; sequence GPMFSGKS. The active-site Proton acceptor is Glu-83. Phe-113 is a binding site for substrate. Zn(2+)-binding residues include Cys-138 and Cys-141. 157-161 lines the substrate pocket; that stretch reads IEIIG. Zn(2+)-binding residues include Cys-170 and Cys-173.

Belongs to the thymidine kinase family. In terms of assembly, homotetramer. Two molecules of substrate bind to each enzyme tetramer.

It catalyses the reaction thymidine + ATP = dTMP + ADP + H(+). In terms of biological role, phosphorylates thymidine and thymidine analogs, such as azidothymidine (AZT). Part of the salvage pathway for pyrimidine deoxyribonucleotide synthesis. The chain is Thymidine kinase (OPG101) from Homo sapiens (Human).